A 412-amino-acid polypeptide reads, in one-letter code: Putative competence-damage inducible protein (412 aa).

This sequence belongs to the CinA family.

The sequence is that of Putative competence-damage inducible protein from Clostridium perfringens (strain SM101 / Type A).